A 692-amino-acid chain; its full sequence is Protein arginine N-methyltransferase 7 (692 aa).

SAM-dependent MTase PRMT-type domains lie at 14–345 (SLEW…YCVW) and 358–684 (EVYQ…ITME). Position 32 is an omega-N-methylarginine (R32). Residues E144 and E153 contribute to the active site.

Belongs to the class I-like SAM-binding methyltransferase superfamily. Protein arginine N-methyltransferase family. PRMT7 subfamily. As to quaternary structure, interacts with CTCFL, PRMT5 and SNRPD3. Homodimer and heterodimer.

It localises to the cytoplasm. It is found in the nucleus. The catalysed reaction is L-arginyl-[protein] + S-adenosyl-L-methionine = N(omega)-methyl-L-arginyl-[protein] + S-adenosyl-L-homocysteine + H(+). Arginine methyltransferase that can both catalyze the formation of omega-N monomethylarginine (MMA) and symmetrical dimethylarginine (sDMA), with a preference for the formation of MMA. Specifically mediates the symmetrical dimethylation of arginine residues in the small nuclear ribonucleoproteins Sm D1 (SNRPD1) and Sm D3 (SNRPD3); such methylation being required for the assembly and biogenesis of snRNP core particles. Specifically mediates the symmetric dimethylation of histone H4 'Arg-3' to form H4R3me2s. Plays a role in gene imprinting by being recruited by CTCFL at the H19 imprinted control region (ICR) and methylating histone H4 to form H4R3me2s, possibly leading to recruit DNA methyltransferases at these sites. May also play a role in embryonic stem cell (ESC) pluripotency. Also able to mediate the arginine methylation of histone H2A and myelin basic protein (MBP) in vitro; the relevance of such results is however unclear in vivo. In Cricetulus longicaudatus (Long-tailed dwarf hamster), this protein is Protein arginine N-methyltransferase 7 (Prmt7).